A 127-amino-acid chain; its full sequence is uncharacterized protein (127 aa).

Residues methionine 1–glycine 23 form the signal peptide. Residues cysteine 43–arginine 127 are disordered. Residues proline 59 to leucine 70 show a composition bias toward low complexity.

Its subcellular location is the secreted. This is an uncharacterized protein from Homo sapiens (Human).